The primary structure comprises 275 residues: NH(3)-dependent NAD(+) synthetase (275 aa).

Residue Gly-46 to Ser-53 coordinates ATP. Asp-52 serves as a coordination point for Mg(2+). Arg-140 provides a ligand contact to deamido-NAD(+). Residue Thr-160 coordinates ATP. Residue Glu-165 coordinates Mg(2+). Positions 173 and 180 each coordinate deamido-NAD(+). 2 residues coordinate ATP: Lys-189 and Thr-211. His-260 to Lys-261 is a binding site for deamido-NAD(+).

This sequence belongs to the NAD synthetase family. Homodimer.

It catalyses the reaction deamido-NAD(+) + NH4(+) + ATP = AMP + diphosphate + NAD(+) + H(+). It participates in cofactor biosynthesis; NAD(+) biosynthesis; NAD(+) from deamido-NAD(+) (ammonia route): step 1/1. Its function is as follows. Catalyzes the ATP-dependent amidation of deamido-NAD to form NAD. Uses ammonia as a nitrogen source. This Salmonella choleraesuis (strain SC-B67) protein is NH(3)-dependent NAD(+) synthetase.